Here is a 704-residue protein sequence, read N- to C-terminus: Phosphate acetyltransferase (704 aa).

The interval 380–704 (FNLIEKAKRN…IQAQAEKGLI (325 aa)) is phosphate acetyltransferase.

This sequence in the N-terminal section; belongs to the CobB/CobQ family. In the C-terminal section; belongs to the phosphate acetyltransferase and butyryltransferase family. Homohexamer.

The protein localises to the cytoplasm. The enzyme catalyses acetyl-CoA + phosphate = acetyl phosphate + CoA. Its pathway is metabolic intermediate biosynthesis; acetyl-CoA biosynthesis; acetyl-CoA from acetate: step 2/2. Involved in acetate metabolism. This chain is Phosphate acetyltransferase (pta), found in Nitratidesulfovibrio vulgaris (strain ATCC 29579 / DSM 644 / CCUG 34227 / NCIMB 8303 / VKM B-1760 / Hildenborough) (Desulfovibrio vulgaris).